A 131-amino-acid polypeptide reads, in one-letter code: Heterochromatin silencing protein rss1 (131 aa).

Monomer.

It is found in the cytoplasm. It localises to the nucleus. Required for heterochromatin silencing within pericentromeric repeats and at telomers. Facilitates the recruitment of Clr6 histone deacetylase (HDAC) by interacting with histones. Also interacts with Rad25, which mediates heterochromatin silencing in DNA repeats by recruiting the RITS complex. Together with Rad25, forms a regulatory hub that defines heterochromatin silencing within tandem repeats via linking RNAi and HDAC. The chain is Heterochromatin silencing protein rss1 (rss1) from Schizosaccharomyces pombe (strain 972 / ATCC 24843) (Fission yeast).